We begin with the raw amino-acid sequence, 148 residues long: Ubiquitin-conjugating enzyme E2 10 (148 aa).

The region spanning 1 to 147 (MASKRILKEL…ARSWTQKYAM (147 aa)) is the UBC core domain. Residue Cys85 is the Glycyl thioester intermediate of the active site.

The protein belongs to the ubiquitin-conjugating enzyme family. Interacts with CHIP and the E3 ubiquitin ligase BB. Associates with the E3 ubiquitin ligase JMJ24. Ubiquitously expressed with the highest levels in rosette leaves, roots and petals.

The enzyme catalyses S-ubiquitinyl-[E1 ubiquitin-activating enzyme]-L-cysteine + [E2 ubiquitin-conjugating enzyme]-L-cysteine = [E1 ubiquitin-activating enzyme]-L-cysteine + S-ubiquitinyl-[E2 ubiquitin-conjugating enzyme]-L-cysteine.. The protein operates within protein modification; protein ubiquitination. Accepts the ubiquitin from the E1 complex and catalyzes its covalent attachment to other proteins. Mediates the selective degradation of short-lived and abnormal proteins. This Arabidopsis thaliana (Mouse-ear cress) protein is Ubiquitin-conjugating enzyme E2 10.